Here is a 49-residue protein sequence, read N- to C-terminus: Sporulation protein YjcZ (49 aa).

Residues 29–49 traverse the membrane as a helical segment; it reads STFVLLVVLFILLIIVGASFF.

The protein belongs to the SscA family.

The protein resides in the membrane. The chain is Sporulation protein YjcZ (yjcZ) from Bacillus subtilis (strain 168).